The chain runs to 551 residues: Hydroxylamine reductase (551 aa).

Residues Cys-3, Cys-6, Cys-18, and Cys-25 each contribute to the [2Fe-2S] cluster site. Positions 249, 273, 317, 405, 433, 458, 492, and 494 each coordinate hybrid [4Fe-2O-2S] cluster. Cys-405 bears the Cysteine persulfide mark.

It belongs to the HCP family. [2Fe-2S] cluster serves as cofactor. Hybrid [4Fe-2O-2S] cluster is required as a cofactor.

The protein localises to the cytoplasm. It carries out the reaction A + NH4(+) + H2O = hydroxylamine + AH2 + H(+). Catalyzes the reduction of hydroxylamine to form NH(3) and H(2)O. In Edwardsiella ictaluri (strain 93-146), this protein is Hydroxylamine reductase.